The following is a 222-amino-acid chain: Uridine diphosphate glucose pyrophosphatase NUDT14 (222 aa).

Positions 38–206 (KTHDSVTILM…DIPKTLGVIY (169 aa)) constitute a Nudix hydrolase domain. The Nudix box signature appears at 111–129 (PGLSLEEAACKEAWEECGY).

This sequence belongs to the Nudix hydrolase family. In terms of assembly, homodimer. Mg(2+) serves as cofactor.

The protein resides in the cytoplasm. It catalyses the reaction UDP-sugar + H2O = UMP + alpha-D-aldose 1-phosphate.. In terms of biological role, hydrolyzes UDP-glucose to glucose 1-phosphate and UMP and ADP-ribose to ribose 5-phosphate and AMP. The physiological substrate is probably UDP-glucose. Poor activity on other substrates such as ADP-glucose, CDP-glucose, GDP-glucose and GDP-mannose. The chain is Uridine diphosphate glucose pyrophosphatase NUDT14 (Nudt14) from Mus musculus (Mouse).